The chain runs to 423 residues: UPF0229 protein PSPA7_0730 (423 aa).

The disordered stretch occupies residues 84–107 (AGEHIARPSGGGGGRGGGKASNSG). Positions 92 to 102 (SGGGGGRGGGK) are enriched in gly residues.

The protein belongs to the UPF0229 family.

The protein is UPF0229 protein PSPA7_0730 of Pseudomonas paraeruginosa (strain DSM 24068 / PA7) (Pseudomonas aeruginosa (strain PA7)).